A 162-amino-acid chain; its full sequence is Transcription elongation factor GreA (162 aa).

Positions 45-74 form a coiled coil; sequence ENAEYEAAREKQAFIEGRIKELEDMTARAE.

The protein belongs to the GreA/GreB family.

In terms of biological role, necessary for efficient RNA polymerase transcription elongation past template-encoded arresting sites. The arresting sites in DNA have the property of trapping a certain fraction of elongating RNA polymerases that pass through, resulting in locked ternary complexes. Cleavage of the nascent transcript by cleavage factors such as GreA or GreB allows the resumption of elongation from the new 3'terminus. GreA releases sequences of 2 to 3 nucleotides. The protein is Transcription elongation factor GreA of Rickettsia prowazekii (strain Madrid E).